Consider the following 563-residue polypeptide: Endoglucanase B (563 aa).

Positions 1–27 (MKKFLVLLIALIMIATLLVVPGVQTSA) form a signal peptide, or 31. Residue E204 is the Proton donor of the active site. E363 functions as the Nucleophile in the catalytic mechanism. Positions 476-495 (SVTPSPSATPSPTTITAPPT) are disordered. One can recognise a Dockerin domain in the interval 496–562 (DTVTYGDVNG…VLRSISELPY (67 aa)).

Belongs to the glycosyl hydrolase 5 (cellulase A) family.

It catalyses the reaction Endohydrolysis of (1-&gt;4)-beta-D-glucosidic linkages in cellulose, lichenin and cereal beta-D-glucans.. In terms of biological role, this enzyme catalyzes the endohydrolysis of 1,4-beta-glucosidic linkages in cellulose, lichenin and cereal beta-D-glucans. This is Endoglucanase B (celB) from Acetivibrio thermocellus (strain ATCC 27405 / DSM 1237 / JCM 9322 / NBRC 103400 / NCIMB 10682 / NRRL B-4536 / VPI 7372) (Clostridium thermocellum).